Consider the following 83-residue polypeptide: Cytochrome b559 subunit alpha (83 aa).

The chain crosses the membrane as a helical span at residues 21-35; that stretch reads VIHSITIPSLFIAGW. H23 lines the heme pocket.

It belongs to the PsbE/PsbF family. As to quaternary structure, heterodimer of an alpha subunit and a beta subunit. PSII is composed of 1 copy each of membrane proteins PsbA, PsbB, PsbC, PsbD, PsbE, PsbF, PsbH, PsbI, PsbJ, PsbK, PsbL, PsbM, PsbT, PsbX, PsbY, PsbZ, Psb30/Ycf12, at least 3 peripheral proteins of the oxygen-evolving complex and a large number of cofactors. It forms dimeric complexes. It depends on heme b as a cofactor.

It is found in the plastid. It localises to the chloroplast thylakoid membrane. This b-type cytochrome is tightly associated with the reaction center of photosystem II (PSII). PSII is a light-driven water:plastoquinone oxidoreductase that uses light energy to abstract electrons from H(2)O, generating O(2) and a proton gradient subsequently used for ATP formation. It consists of a core antenna complex that captures photons, and an electron transfer chain that converts photonic excitation into a charge separation. The polypeptide is Cytochrome b559 subunit alpha (Piper cenocladum (Ant piper)).